Reading from the N-terminus, the 264-residue chain is MRHSRILADVGAALRFYSRIPVPAGAAEDAFAPPDLKRIAYAVPLAGAAIGLAGAAILIGAHALGLPNLVAAILAVLTCVLLTGALHEDGLADTADGFGGGASRLRRLEIMRDSRIGSYGACALVFSLLLRVALLDGLLALSPTRAALALIAAASLSRAAGMLLLEFLPPARADGASAAAGQPGADAAVRSALVGALLATLLIVPSTGVGATLMAIGLSVLALFAMTRLSNRLIGGQTGDVAGAVQQLCEIAFLMGVLIYARPH.

The next 6 helical transmembrane spans lie at 39-59 (IAYA…AILI), 63-83 (ALGL…VLLT), 121-141 (ACAL…LLAL), 148-168 (LALI…LEFL), 201-221 (LLIV…LSVL), and 241-261 (VAGA…LIYA).

This sequence belongs to the CobS family. Requires Mg(2+) as cofactor.

It is found in the cell inner membrane. The enzyme catalyses alpha-ribazole + adenosylcob(III)inamide-GDP = adenosylcob(III)alamin + GMP + H(+). The catalysed reaction is alpha-ribazole 5'-phosphate + adenosylcob(III)inamide-GDP = adenosylcob(III)alamin 5'-phosphate + GMP + H(+). The protein operates within cofactor biosynthesis; adenosylcobalamin biosynthesis; adenosylcobalamin from cob(II)yrinate a,c-diamide: step 7/7. Joins adenosylcobinamide-GDP and alpha-ribazole to generate adenosylcobalamin (Ado-cobalamin). Also synthesizes adenosylcobalamin 5'-phosphate from adenosylcobinamide-GDP and alpha-ribazole 5'-phosphate. This chain is Adenosylcobinamide-GDP ribazoletransferase, found in Azorhizobium caulinodans (strain ATCC 43989 / DSM 5975 / JCM 20966 / LMG 6465 / NBRC 14845 / NCIMB 13405 / ORS 571).